We begin with the raw amino-acid sequence, 315 residues long: L-lactate dehydrogenase (315 aa).

Residues Val-17, Asp-38, Lys-43, Tyr-69, and Gly-83–Ala-84 each bind NAD(+). The substrate site is built by Gln-86 and Arg-92. NAD(+)-binding positions include Ser-105, Ala-122–Asn-124, and Ser-147. Substrate is bound at residue Asn-124–Asp-127. Asp-152 to Arg-155 contacts substrate. Residues Arg-157 and His-172 each contribute to the beta-D-fructose 1,6-bisphosphate site. His-179 (proton acceptor) is an active-site residue. Tyr-223 bears the Phosphotyrosine mark. Position 232 (Thr-232) interacts with substrate.

It belongs to the LDH/MDH superfamily. LDH family. As to quaternary structure, homotetramer.

Its subcellular location is the cytoplasm. It catalyses the reaction (S)-lactate + NAD(+) = pyruvate + NADH + H(+). The protein operates within fermentation; pyruvate fermentation to lactate; (S)-lactate from pyruvate: step 1/1. With respect to regulation, allosterically activated by fructose 1,6-bisphosphate (FBP). Catalyzes the conversion of lactate to pyruvate. The protein is L-lactate dehydrogenase of Macrococcus caseolyticus (strain JCSC5402) (Macrococcoides caseolyticum).